A 786-amino-acid polypeptide reads, in one-letter code: Endonuclease MutS2 (786 aa).

332 to 339 (GPNTGGKT) is a binding site for ATP. Residues 711–786 (IDLRGMDSEE…GTGVTVVILK (76 aa)) enclose the Smr domain.

This sequence belongs to the DNA mismatch repair MutS family. MutS2 subfamily. In terms of assembly, homodimer. Binds to stalled ribosomes, contacting rRNA.

Its function is as follows. Endonuclease that is involved in the suppression of homologous recombination and thus may have a key role in the control of bacterial genetic diversity. In terms of biological role, acts as a ribosome collision sensor, splitting the ribosome into its 2 subunits. Detects stalled/collided 70S ribosomes which it binds and splits by an ATP-hydrolysis driven conformational change. Acts upstream of the ribosome quality control system (RQC), a ribosome-associated complex that mediates the extraction of incompletely synthesized nascent chains from stalled ribosomes and their subsequent degradation. Probably generates substrates for RQC. This chain is Endonuclease MutS2, found in Clostridium perfringens (strain ATCC 13124 / DSM 756 / JCM 1290 / NCIMB 6125 / NCTC 8237 / Type A).